A 519-amino-acid polypeptide reads, in one-letter code: NADH-quinone oxidoreductase subunit C/D (519 aa).

Residues 1-138 (MSERIEIPAE…TNEEPVDTTQ (138 aa)) are NADH dehydrogenase I subunit C. The tract at residues 159–519 (DEYIINIGPQ…VDYVVPDIDR (361 aa)) is NADH dehydrogenase I subunit D.

This sequence in the N-terminal section; belongs to the complex I 30 kDa subunit family. In the C-terminal section; belongs to the complex I 49 kDa subunit family. In terms of assembly, NDH-1 is composed of 13 different subunits. Subunits NuoB, CD, E, F, and G constitute the peripheral sector of the complex.

The protein localises to the cell inner membrane. The enzyme catalyses a quinone + NADH + 5 H(+)(in) = a quinol + NAD(+) + 4 H(+)(out). Its function is as follows. NDH-1 shuttles electrons from NADH, via FMN and iron-sulfur (Fe-S) centers, to quinones in the respiratory chain. The immediate electron acceptor for the enzyme in this species is believed to be a menaquinone. Couples the redox reaction to proton translocation (for every two electrons transferred, four hydrogen ions are translocated across the cytoplasmic membrane), and thus conserves the redox energy in a proton gradient. This is NADH-quinone oxidoreductase subunit C/D from Phocaeicola vulgatus (strain ATCC 8482 / DSM 1447 / JCM 5826 / CCUG 4940 / NBRC 14291 / NCTC 11154) (Bacteroides vulgatus).